Consider the following 127-residue polypeptide: MRHRKSGRQLNRNSSHRKAMFSNMASSLVRHEVIKTTLPKAKELRRVVEPLITLAKTDSVANRRLAFARTRDNEVVAKLFNELGPRFAARQGGYTRILKAGFRAGDKAPMAYIELVDRPAAEEAAAE.

It belongs to the bacterial ribosomal protein bL17 family. Part of the 50S ribosomal subunit. Contacts protein L32.

This Vibrio vulnificus (strain CMCP6) protein is Large ribosomal subunit protein bL17.